A 227-amino-acid polypeptide reads, in one-letter code: Prolactin (227 aa).

The first 28 residues, 1-28, serve as a signal peptide directing secretion; the sequence is MNIKGSPWKGSLLLLLVSNLLLCQNVAP. An intrachain disulfide couples Cys32 to Cys39. Ser54 is modified (phosphoserine). A glycan (N-linked (GlcNAc...) asparagine) is linked at Asn59. Ser62 and Ser118 each carry phosphoserine. 2 disulfides stabilise this stretch: Cys86/Cys202 and Cys219/Cys227.

This sequence belongs to the somatotropin/prolactin family. As to quaternary structure, interacts with PRLR.

The protein localises to the secreted. Prolactin acts primarily on the mammary gland by promoting lactation. This is Prolactin (PRL) from Macaca mulatta (Rhesus macaque).